Here is a 554-residue protein sequence, read N- to C-terminus: Phenylalanine--tRNA ligase beta subunit (554 aa).

Residues 276-351 (LSLKSRMISV…INYGYEKFEG (76 aa)) form the B5 domain. Mg(2+)-binding residues include aspartate 329, aspartate 335, glutamate 338, and glutamate 339.

Belongs to the phenylalanyl-tRNA synthetase beta subunit family. Type 2 subfamily. Tetramer of two alpha and two beta subunits. The cofactor is Mg(2+).

The protein resides in the cytoplasm. The catalysed reaction is tRNA(Phe) + L-phenylalanine + ATP = L-phenylalanyl-tRNA(Phe) + AMP + diphosphate + H(+). The sequence is that of Phenylalanine--tRNA ligase beta subunit from Methanococcus maripaludis (strain C5 / ATCC BAA-1333).